A 344-amino-acid polypeptide reads, in one-letter code: Holliday junction branch migration complex subunit RuvB (344 aa).

Positions 1–181 (MERIVTPAEM…FGVLCAMEYY (181 aa)) are large ATPase domain (RuvB-L). ATP is bound by residues Leu20, Arg21, Gly62, Lys65, Thr66, Thr67, 128–130 (EDY), Arg171, Tyr181, and Arg218. Residue Thr66 participates in Mg(2+) binding. Residues 182–252 (DENQLKEIVI…EAREALELLE (71 aa)) form a small ATPAse domain (RuvB-S) region. Residues 255–344 (NQGFDKVDNK…SNKGQTSFFK (90 aa)) form a head domain (RuvB-H) region. Arg310 and Arg315 together coordinate DNA.

This sequence belongs to the RuvB family. In terms of assembly, homohexamer. Forms an RuvA(8)-RuvB(12)-Holliday junction (HJ) complex. HJ DNA is sandwiched between 2 RuvA tetramers; dsDNA enters through RuvA and exits via RuvB. An RuvB hexamer assembles on each DNA strand where it exits the tetramer. Each RuvB hexamer is contacted by two RuvA subunits (via domain III) on 2 adjacent RuvB subunits; this complex drives branch migration. In the full resolvosome a probable DNA-RuvA(4)-RuvB(12)-RuvC(2) complex forms which resolves the HJ.

The protein resides in the cytoplasm. The catalysed reaction is ATP + H2O = ADP + phosphate + H(+). The RuvA-RuvB-RuvC complex processes Holliday junction (HJ) DNA during genetic recombination and DNA repair, while the RuvA-RuvB complex plays an important role in the rescue of blocked DNA replication forks via replication fork reversal (RFR). RuvA specifically binds to HJ cruciform DNA, conferring on it an open structure. The RuvB hexamer acts as an ATP-dependent pump, pulling dsDNA into and through the RuvAB complex. RuvB forms 2 homohexamers on either side of HJ DNA bound by 1 or 2 RuvA tetramers; 4 subunits per hexamer contact DNA at a time. Coordinated motions by a converter formed by DNA-disengaged RuvB subunits stimulates ATP hydrolysis and nucleotide exchange. Immobilization of the converter enables RuvB to convert the ATP-contained energy into a lever motion, pulling 2 nucleotides of DNA out of the RuvA tetramer per ATP hydrolyzed, thus driving DNA branch migration. The RuvB motors rotate together with the DNA substrate, which together with the progressing nucleotide cycle form the mechanistic basis for DNA recombination by continuous HJ branch migration. Branch migration allows RuvC to scan DNA until it finds its consensus sequence, where it cleaves and resolves cruciform DNA. This chain is Holliday junction branch migration complex subunit RuvB, found in Clostridium botulinum (strain Alaska E43 / Type E3).